Here is a 333-residue protein sequence, read N- to C-terminus: Heat shock transcription factor, X-linked member 3 (333 aa).

The disordered stretch occupies residues 1–66; sequence MASQNTEQEY…QDNSPPEDRN (66 aa). The span at 29–39 shows a compositional bias: low complexity; it reads GSSPDPNPDSS. Polar residues predominate over residues 49–60; the sequence is AMSQDPGSQDNS. The DNA-binding element occupies 79 to 182; that stretch reads FRLSFPRKLW…PRLLENIQRK (104 aa). The interval 227–275 is disordered; it reads QGAPSVQGPSGTQSFRRSGMWSKKSATRHPLGNGPPQEPNGPSWEGTSG. Residues 228 to 242 show a composition bias toward polar residues; it reads GAPSVQGPSGTQSFR.

The protein belongs to the HSF family.

It localises to the nucleus. The polypeptide is Heat shock transcription factor, X-linked member 3 (Homo sapiens (Human)).